We begin with the raw amino-acid sequence, 136 residues long: General odorant-binding protein 57e (136 aa).

An N-terminal signal peptide occupies residues 1–20 (MLDQLTLCLLLNFLCANVLA). Disulfide bonds link cysteine 28/cysteine 61, cysteine 57/cysteine 109, and cysteine 98/cysteine 118.

It belongs to the PBP/GOBP family.

In terms of biological role, present in the aqueous fluid surrounding olfactory sensory dendrites and are thought to aid in the capture and transport of hydrophobic odorants into and through this fluid. In Drosophila melanogaster (Fruit fly), this protein is General odorant-binding protein 57e.